A 216-amino-acid chain; its full sequence is Cytidylate kinase (216 aa).

Residue 10–18 coordinates ATP; it reads GPAGAGKST.

This sequence belongs to the cytidylate kinase family. Type 1 subfamily.

It localises to the cytoplasm. It catalyses the reaction CMP + ATP = CDP + ADP. It carries out the reaction dCMP + ATP = dCDP + ADP. The protein is Cytidylate kinase of Clostridioides difficile (strain 630) (Peptoclostridium difficile).